Reading from the N-terminus, the 1343-residue chain is DNA-directed RNA polymerase subunit beta (1343 aa).

It belongs to the RNA polymerase beta chain family. As to quaternary structure, the RNAP catalytic core consists of 2 alpha, 1 beta, 1 beta' and 1 omega subunit. When a sigma factor is associated with the core the holoenzyme is formed, which can initiate transcription.

The enzyme catalyses RNA(n) + a ribonucleoside 5'-triphosphate = RNA(n+1) + diphosphate. Functionally, DNA-dependent RNA polymerase catalyzes the transcription of DNA into RNA using the four ribonucleoside triphosphates as substrates. The sequence is that of DNA-directed RNA polymerase subunit beta from Shewanella denitrificans (strain OS217 / ATCC BAA-1090 / DSM 15013).